Reading from the N-terminus, the 105-residue chain is Insulin (105 aa).

Residues 1-24 (MALWTRLRPLLALLALWPPPPARA) form the signal peptide. 3 cysteine pairs are disulfide-bonded: cysteine 31–cysteine 91, cysteine 43–cysteine 104, and cysteine 90–cysteine 95. A propeptide spans 57 to 82 (EVEGPQVGALELAGGPGAGGLEGPPQ) (c peptide).

It belongs to the insulin family. As to quaternary structure, heterodimer of a B chain and an A chain linked by two disulfide bonds.

The protein localises to the secreted. Insulin decreases blood glucose concentration. It increases cell permeability to monosaccharides, amino acids and fatty acids. It accelerates glycolysis, the pentose phosphate cycle, and glycogen synthesis in liver. This chain is Insulin (INS), found in Bos taurus (Bovine).